The sequence spans 1011 residues: Protein FAM83B (1011 aa).

Residues 1–283 (METSSMLSSL…RTLYARSCVP (283 aa)) are DUF1669. The segment at 1-284 (METSSMLSSL…TLYARSCVPS (284 aa)) is required for interaction with RAF1 and for the function. Residues Ser-334, Ser-422, Ser-424, Ser-466, and Ser-543 each carry the phosphoserine modification. Residues 555 to 585 (EVNSCTTGSSNSTIIGSQGSETPKEVPDTPT) form a disordered region. A compositionally biased stretch (low complexity) spans 557 to 574 (NSCTTGSSNSTIIGSQGS). A Phosphoserine modification is found at Ser-664. Disordered regions lie at residues 691 to 738 (NRVR…TKSV) and 750 to 769 (ESNK…SFLK). A compositionally biased stretch (basic and acidic residues) spans 694 to 705 (RQPEKPKEDLLK). 2 stretches are compositionally biased toward polar residues: residues 706-715 (SSKSMHNVTH) and 727-738 (RNSPSGTTTKSV). Residues 750–762 (ESNKELASKKEVK) are compositionally biased toward basic and acidic residues. Position 782 is a phosphothreonine (Thr-782). Ser-802 is modified (phosphoserine). Residues 807 to 928 (LVSEGEENQK…TSSELLRSHS (122 aa)) form a disordered region. Residues 813–828 (ENQKPKKSDTKVDSSP) are compositionally biased toward basic and acidic residues. Phosphoserine is present on residues Ser-852, Ser-869, and Ser-915. The segment covering 913 to 923 (TSSPRPTSSEL) has biased composition (low complexity).

Belongs to the FAM83 family. In terms of assembly, interacts with EGFR; positively regulates EGFR inducing its autophosphorylation in absence of stimulation by EGF. Interacts with RAF1; displaces 14-3-3 proteins from RAF1 and activates RAF1 within the RAS/MAPK signaling cascade. Interacts with AKT1, PIK3CA and PIK3R1; activates the PI3K/AKT signaling cascade. Directly interacts (via DUF1669) with casein kinase isoforms CSNK1A1, CSNK1A1L, CSNK1D and CSNK1E. In terms of processing, phosphorylated in vitro by CSNK1A1.

It localises to the cytoplasm. The protein localises to the membrane. Functionally, probable proto-oncogene that functions in the epidermal growth factor receptor/EGFR signaling pathway. Activates both the EGFR itself and downstream RAS/MAPK and PI3K/AKT/TOR signaling cascades. This chain is Protein FAM83B, found in Homo sapiens (Human).